The chain runs to 111 residues: Putative protein YddJ (111 aa).

The protein is Putative protein YddJ (yddJ) of Escherichia coli (strain K12).